The chain runs to 586 residues: A-type ATP synthase subunit A (586 aa).

232-239 (GPFGSGKT) serves as a coordination point for ATP.

The protein belongs to the ATPase alpha/beta chains family. In terms of assembly, has multiple subunits with at least A(3), B(3), C, D, E, F, H, I and proteolipid K(x).

It is found in the cell membrane. It catalyses the reaction ATP + H2O + 4 H(+)(in) = ADP + phosphate + 5 H(+)(out). Component of the A-type ATP synthase that produces ATP from ADP in the presence of a proton gradient across the membrane. The A chain is the catalytic subunit. The chain is A-type ATP synthase subunit A from Methanococcus maripaludis (strain C7 / ATCC BAA-1331).